A 244-amino-acid chain; its full sequence is Krueppel-like factor 9 (244 aa).

Disordered stretches follow at residues 24 to 51 (VPEH…GDPG) and 79 to 143 (PSVC…EKRH). The span at 32-51 (DAERLRLPEREVTKEHGDPG) shows a compositional bias: basic and acidic residues. Ser122 carries the phosphoserine modification. A compositionally biased stretch (basic residues) spans 134 to 143 (KGKHASEKRH). 3 C2H2-type zinc fingers span residues 143–167 (HKCP…YRVH), 173–197 (FPCT…YRTH), and 203–225 (FRCP…ARRH).

It belongs to the Sp1 C2H2-type zinc-finger protein family. In terms of assembly, interacts with ZZEF1.

It is found in the nucleus. In terms of biological role, transcription factor that binds to GC box promoter elements. Selectively activates mRNA synthesis from genes containing tandem repeats of GC boxes but represses genes with a single GC box. Acts as an epidermal circadian transcription factor regulating keratinocyte proliferation. This Rattus norvegicus (Rat) protein is Krueppel-like factor 9 (Klf9).